Consider the following 515-residue polypeptide: 2-isopropylmalate synthase (515 aa).

Residues 4–266 enclose the Pyruvate carboxyltransferase domain; that stretch reads IKFFDTTLRD…ETRLNLQEIK (263 aa). Residues Asp-13, His-201, His-203, and Asn-237 each contribute to the Mn(2+) site. Residues 391–515 form a regulatory domain region; sequence QLSSIQVQYG…RAENEKVATS (125 aa).

Belongs to the alpha-IPM synthase/homocitrate synthase family. LeuA type 1 subfamily. Homodimer. It depends on Mn(2+) as a cofactor.

The protein resides in the cytoplasm. It catalyses the reaction 3-methyl-2-oxobutanoate + acetyl-CoA + H2O = (2S)-2-isopropylmalate + CoA + H(+). Its pathway is amino-acid biosynthesis; L-leucine biosynthesis; L-leucine from 3-methyl-2-oxobutanoate: step 1/4. Functionally, catalyzes the condensation of the acetyl group of acetyl-CoA with 3-methyl-2-oxobutanoate (2-ketoisovalerate) to form 3-carboxy-3-hydroxy-4-methylpentanoate (2-isopropylmalate). The sequence is that of 2-isopropylmalate synthase from Geobacillus stearothermophilus (Bacillus stearothermophilus).